The primary structure comprises 271 residues: Zinc finger protein 501 (271 aa).

9 C2H2-type zinc fingers span residues 22–44 (SKCSECGKFFTQRSSLTQHQRIH), 50–72 (YVCSECGSCFRKQSNLTQHLRIH), 78–100 (YKCNECEKAFQTKAILVQHLRIH), 106–128 (YKCNECGKAFCQSPSLIKHQRIH), 134–156 (YKCTECGKAFSQSICLTRHQRSH), 162–184 (FKCNECGKAFNQSACLMQHQRIH), 190–212 (YTCTECGKAFTQNSSLVEHERTH), 218–240 (YKCSECEKTFRKQAHLSEHYRIH), and 246–268 (YECVGCGKSFRHSSALLRHQRLH).

Belongs to the krueppel C2H2-type zinc-finger protein family.

It is found in the nucleus. The protein localises to the nucleolus. Functionally, may be involved in transcriptional regulation. Essential for Golgi structural integrity. The protein is Zinc finger protein 501 (ZNF501) of Homo sapiens (Human).